The primary structure comprises 302 residues: Cuticle collagen dpy-13 (302 aa).

Triple-helical region stretches follow at residues 106-135, 154-210, and 219-278; these read GPQG…PGKA, GPPG…EGLP, and GEPG…PGTP. The disordered stretch occupies residues 108 to 284; that stretch reads QGAPGAPGKP…PGTPGERGIC (177 aa). Over residues 144–159 the composition is skewed to pro residues; sequence TPPPCKPCPQGPPGAP. Residues 188–197 show a composition bias toward low complexity; it reads PKGPNGAPGK. Pro residues-rich tracts occupy residues 247-257 and 268-277; these read QPGPKGPPGPD and QPGPVGPPGT.

Belongs to the cuticular collagen family. As to quaternary structure, collagen polypeptide chains are complexed within the cuticle by disulfide bonds and other types of covalent cross-links.

Its function is as follows. Nematode cuticles are composed largely of collagen-like proteins. The cuticle functions both as an exoskeleton and as a barrier to protect the worm from its environment. Mutations in dpy-13 affects the body shape. This is Cuticle collagen dpy-13 (dpy-13) from Caenorhabditis elegans.